The sequence spans 266 residues: Thymidylate synthase (266 aa).

Arg24 is a dUMP binding site. Residue His54 coordinates (6R)-5,10-methylene-5,6,7,8-tetrahydrofolate. Residue 129-130 (RR) coordinates dUMP. Cys149 acts as the Nucleophile in catalysis. Residues 169 to 172 (RSAD), Asn180, and 210 to 212 (HIY) contribute to the dUMP site. Residue Asp172 coordinates (6R)-5,10-methylene-5,6,7,8-tetrahydrofolate. (6R)-5,10-methylene-5,6,7,8-tetrahydrofolate is bound at residue Ala265.

This sequence belongs to the thymidylate synthase family. Bacterial-type ThyA subfamily. In terms of assembly, homodimer.

The protein resides in the cytoplasm. The catalysed reaction is dUMP + (6R)-5,10-methylene-5,6,7,8-tetrahydrofolate = 7,8-dihydrofolate + dTMP. It functions in the pathway pyrimidine metabolism; dTTP biosynthesis. Its function is as follows. Catalyzes the reductive methylation of 2'-deoxyuridine-5'-monophosphate (dUMP) to 2'-deoxythymidine-5'-monophosphate (dTMP) while utilizing 5,10-methylenetetrahydrofolate (mTHF) as the methyl donor and reductant in the reaction, yielding dihydrofolate (DHF) as a by-product. This enzymatic reaction provides an intracellular de novo source of dTMP, an essential precursor for DNA biosynthesis. This chain is Thymidylate synthase, found in Mycobacterium avium (strain 104).